The following is a 464-amino-acid chain: Fumarate hydratase class II (464 aa).

Residues 98-100, Arg126, 129-132, 139-141, and Thr187 contribute to the substrate site; these read SGT, HPND, and SSN. His188 acts as the Proton donor/acceptor in catalysis. Residue Ser318 is part of the active site. Substrate contacts are provided by residues Ser319 and 324-326; that span reads KVN.

Belongs to the class-II fumarase/aspartase family. Fumarase subfamily. Homotetramer.

The protein localises to the cytoplasm. The enzyme catalyses (S)-malate = fumarate + H2O. It participates in carbohydrate metabolism; tricarboxylic acid cycle; (S)-malate from fumarate: step 1/1. In terms of biological role, involved in the TCA cycle. Catalyzes the stereospecific interconversion of fumarate to L-malate. This Photorhabdus laumondii subsp. laumondii (strain DSM 15139 / CIP 105565 / TT01) (Photorhabdus luminescens subsp. laumondii) protein is Fumarate hydratase class II.